Consider the following 102-residue polypeptide: Carboxysome shell protein CcmK3 (102 aa).

One can recognise a BMC domain in the interval 4–90 (AVGVIQTDGF…PPDNVETVMP (87 aa)).

It belongs to the bacterial microcompartments protein family. CcmK subfamily. As to quaternary structure, interacts stably with CcmK4, forming heterohexamers that can make dodecamers. Heterohexamers have a 1:2 CcmK3:CcmK4 stoichiometry. Upon expression in E.coli forms oligomers that could be dimers or trimers, but never hexamers; bulky residues in the pore region probably preclude the formation of homohexamers.

The protein localises to the carboxysome. Functionally, a probably non-essential, minor shell protein of the carboxysome, a polyhedral inclusion where RuBisCO (ribulose bisphosphate carboxylase, rbcL-rbcS) is sequestered. Hexamers form sheets that form the facets of the polyhedral carboxysome. In PCC 7418 there are several CcmK paralogs with presumably functional differences. This subunit probably only makes heterohexamers with CcmK4. Heterohexamers can also make dodecamers, formation depends on buffer conditions. The chain is Carboxysome shell protein CcmK3 from Halothece sp. (strain PCC 7418) (Synechococcus sp. (strain PCC 7418)).